The sequence spans 310 residues: Transcription initiation factor IIA subunit 1 (310 aa).

Disordered stretches follow at residues Ala-52 to Val-78, Ile-91 to Asp-197, and Val-218 to Asp-261. Low complexity-rich tracts occupy residues Thr-62–Thr-77 and Ser-122–Leu-160. Composition is skewed to acidic residues over residues Thr-173–Asn-183, Leu-225–Ile-236, and Asp-246–Asp-261.

Belongs to the TFIIA subunit 1 family. TFIIA is a heterodimer of the large subunit 1 and a small subunit gamma.

It localises to the nucleus. Functionally, TFIIA is a component of the transcription machinery of RNA polymerase II and plays an important role in transcriptional activation. TFIIA in a complex with tbp mediates transcriptional activity. The chain is Transcription initiation factor IIA subunit 1 (gtf2a1) from Dictyostelium discoideum (Social amoeba).